The chain runs to 372 residues: sn-glycerol-3-phosphate import ATP-binding protein UgpC (372 aa).

Positions 2–233 (LDIQQLVKTY…PASTFVASFI (232 aa)) constitute an ABC transporter domain. An ATP-binding site is contributed by 35 to 42 (GPSGCGKS).

The protein belongs to the ABC transporter superfamily. sn-glycerol-3-phosphate importer (TC 3.A.1.1.3) family. In terms of assembly, the complex is composed of two ATP-binding proteins (UgpC), two transmembrane proteins (UgpA and UgpE) and a solute-binding protein (UgpB).

The protein localises to the cell inner membrane. It carries out the reaction sn-glycerol 3-phosphate(out) + ATP + H2O = sn-glycerol 3-phosphate(in) + ADP + phosphate + H(+). Functionally, part of the ABC transporter complex UgpBAEC involved in sn-glycerol-3-phosphate (G3P) import. Responsible for energy coupling to the transport system. The polypeptide is sn-glycerol-3-phosphate import ATP-binding protein UgpC (Vibrio vulnificus (strain YJ016)).